We begin with the raw amino-acid sequence, 747 residues long: NAD-dependent protein deacetylase sirtuin-1 (747 aa).

Residues Met-1–Ala-135 are disordered. An N-acetylalanine modification is found at Ala-2. The interval Ala-2–Ala-139 is interaction with CLOCK. The interval Ala-2–Cys-268 is interaction with H1-4. A phosphoserine mark is found at Ser-14 and Ser-26. Ser-27 bears the Phosphoserine; by MAPK8 mark. The Nuclear localization signal signature appears at Pro-32 to Arg-39. Phosphoserine; by MAPK8 is present on Ser-47. Positions Pro-61–Glu-100 are enriched in low complexity. Acidic residues predominate over residues Leu-120–Ala-135. The Nuclear export signal signature appears at Ala-138–Asn-145. An interaction with CCAR2 region spans residues Arg-143–Pro-541. 4 positions are modified to phosphoserine: Ser-159, Ser-162, Ser-172, and Ser-173. The Nuclear localization signal signature appears at Ile-223 to Glu-230. The 261-residue stretch at Lys-236–Glu-496 folds into the Deacetylase sirtuin-type domain. An N6-acetyllysine modification is found at Lys-238. The interval Ile-256 to Leu-259 is required for interaction with the sumoylated form of CCAR2. NAD(+) is bound by residues Gly-261–Tyr-280 and Gln-345–Asp-348. Catalysis depends on His-363, which acts as the Proton acceptor. Positions 371 and 374 each coordinate Zn(2+). Lys-377 is modified (N6-acetyllysine). Residues Cys-395 and Cys-398 each coordinate Zn(2+). Residues Cys-395 and Cys-398 each carry the S-nitrosocysteine modification. A Nuclear export signal motif is present at residues Ala-425 to Asp-431. Lys-430 is subject to N6-acetyllysine. NAD(+) is bound by residues Gly-440 to Ser-442, Asn-465 to Glu-467, and Cys-482. Lys-513 bears the N6-acetyllysine mark. Disordered stretches follow at residues Tyr-523–Ser-549 and Ser-562–Asn-587. Residue Thr-530 is modified to Phosphothreonine; by DYRK1A, DYRK3 and MAPK8. At Ser-535 the chain carries Phosphoserine. The span at Asp-537–Ser-549 shows a compositional bias: polar residues. Positions Ser-538–Ser-540 are phosphorylated at one of three serine residues. The residue at position 544 (Thr-544) is a Phosphothreonine. Ser-545 is modified (phosphoserine). The segment covering Ser-569–Gln-580 has biased composition (basic and acidic residues). Lys-610 carries the post-translational modification N6-acetyllysine. Phosphoserine; by CaMK2 is present on residues Ser-659 and Ser-661. Positions Asp-663–Ala-726 are disordered. A compositionally biased stretch (low complexity) spans Leu-666 to Ser-677. A compositionally biased stretch (acidic residues) spans Glu-687 to Asp-707. Phosphothreonine is present on Thr-719. Position 747 is a phosphoserine (Ser-747).

It belongs to the sirtuin family. Class I subfamily. Interacts with XBP1 isoform 2. Found in a complex with PCAF and MYOD1. Interacts with FOXO1; the interaction deacetylates FOXO1, resulting in its nuclear retention and promotion of its transcriptional activity Component of the eNoSC complex, composed of SIRT1, SUV39H1 and RRP8. Interacts with HES1, HEY2 and PML. Interacts with RPS19BP1/AROS. Interacts with CCAR2 (via N-terminus); the interaction disrupts the interaction between SIRT1 and p53/TP53. Interacts with SETD7; the interaction induces the dissociation of SIRT1 from p53/TP53 and increases p53/TP53 activity. Interacts with MYCN, NR1I2, CREBZF, TSC2, TLE1, FOS, JUN, NR0B2, PPARG, NCOR, IRS1, IRS2 and NMNAT1. Interacts with HNF1A; the interaction occurs under nutrient restriction. Interacts with SUZ12; the interaction mediates the association with the PRC4 histone methylation complex which is specific as an association with PCR2 and PCR3 complex variants is not found. Interacts with BCL6; leads to a epigenetic repression of specific target genes. Interacts with CLOCK, BMAL1 and PER2. Interacts with PPARA; the interaction seems to be modulated by NAD(+) levels. Interacts with NR1H3 and this interaction is inhibited in the presence of CCAR2. Interacts with CHEK2. Interacts with p53/TP53. Exhibits a preferential interaction with sumoylated CCAR2 over its unmodified form. Interacts with PACS2. Interacts with SIRT7. Interacts with PUS7. Interacts with TULP3. Interacts with MORN3; the interaction enhances the ubiquitination of p53/TP53. As to quaternary structure, (Microbial infection) Interacts with HIV-1 Tat. Requires Zn(2+) as cofactor. In terms of processing, methylated on multiple lysine residues; methylation is enhanced after DNA damage and is dispensable for deacetylase activity toward p53/TP53. Phosphorylated. Phosphorylated by STK4/MST1, resulting in inhibition of SIRT1-mediated p53/TP53 deacetylation. Phosphorylation by MAPK8/JNK1 at Ser-27, Ser-47, and Thr-530 leads to increased nuclear localization and enzymatic activity. Phosphorylation at Thr-530 by DYRK1A and DYRK3 activates deacetylase activity and promotes cell survival. Phosphorylation by mammalian target of rapamycin complex 1 (mTORC1) at Ser-47 inhibits deacetylation activity. Phosphorylated by CaMK2, leading to increased p53/TP53 and NF-kappa-B p65/RELA deacetylation activity. Phosphorylation at Ser-27 implicating MAPK9 is linked to protein stability. There is some ambiguity for some phosphosites: Ser-159/Ser-162 and Thr-544/Ser-545. Post-translationally, proteolytically cleaved by cathepsin B upon TNF-alpha treatment to yield catalytic inactive but stable SirtT1 75 kDa fragment (75SirT1). In terms of processing, S-nitrosylated by GAPDH, leading to inhibit the NAD-dependent protein deacetylase activity. Acetylated at various Lys residues. Deacetylated via an autocatalytic mechanism. Autodeacetylation at Lys-238 promotes its protein deacetylase activity. Post-translationally, ubiquitinated; leading to degradation. Deubiquitinated by USP22; leading to stabilization. Widely expressed.

The protein resides in the nucleus. Its subcellular location is the PML body. The protein localises to the cytoplasm. It is found in the mitochondrion. It carries out the reaction N(6)-acetyl-L-lysyl-[protein] + NAD(+) + H2O = 2''-O-acetyl-ADP-D-ribose + nicotinamide + L-lysyl-[protein]. The catalysed reaction is N(6)-propanoyl-L-lysyl-[protein] + NAD(+) + H2O = 3''-O-propanoyl-ADP-D-ribose + nicotinamide + L-lysyl-[protein]. It catalyses the reaction N(6)-(2E)-butenoyl-L-lysyl-[protein] + NAD(+) + H2O = 2''-O-(2E)-but-2-enoyl-ADP-D-ribose + nicotinamide + L-lysyl-[protein]. The enzyme catalyses N(6)-[(S)-lactoyl]-L-lysyl-[protein] + NAD(+) + H2O = 2''-O-(S)-lactoyl-ADP-D-ribose + nicotinamide + L-lysyl-[protein]. Its activity is regulated as follows. Inhibited by nicotinamide. Activated by resveratrol (3,5,4'-trihydroxy-trans-stilbene), butein (3,4,2',4'-tetrahydroxychalcone), piceatannol (3,5,3',4'-tetrahydroxy-trans-stilbene), Isoliquiritigenin (4,2',4'-trihydroxychalcone), fisetin (3,7,3',4'-tetrahydroxyflavone) and quercetin (3,5,7,3',4'-pentahydroxyflavone). MAPK8/JNK1 and RPS19BP1/AROS act as positive regulators of deacetylation activity. Negatively regulated by CCAR2. NAD-dependent protein deacetylase that links transcriptional regulation directly to intracellular energetics and participates in the coordination of several separated cellular functions such as cell cycle, response to DNA damage, metabolism, apoptosis and autophagy. Can modulate chromatin function through deacetylation of histones and can promote alterations in the methylation of histones and DNA, leading to transcriptional repression. Deacetylates a broad range of transcription factors and coregulators, thereby regulating target gene expression positively and negatively. Serves as a sensor of the cytosolic ratio of NAD(+)/NADH which is altered by glucose deprivation and metabolic changes associated with caloric restriction. Is essential in skeletal muscle cell differentiation and in response to low nutrients mediates the inhibitory effect on skeletal myoblast differentiation which also involves 5'-AMP-activated protein kinase (AMPK) and nicotinamide phosphoribosyltransferase (NAMPT). Component of the eNoSC (energy-dependent nucleolar silencing) complex, a complex that mediates silencing of rDNA in response to intracellular energy status and acts by recruiting histone-modifying enzymes. The eNoSC complex is able to sense the energy status of cell: upon glucose starvation, elevation of NAD(+)/NADP(+) ratio activates SIRT1, leading to histone H3 deacetylation followed by dimethylation of H3 at 'Lys-9' (H3K9me2) by SUV39H1 and the formation of silent chromatin in the rDNA locus. Deacetylates 'Lys-266' of SUV39H1, leading to its activation. Inhibits skeletal muscle differentiation by deacetylating PCAF and MYOD1. Deacetylates H2A and 'Lys-26' of H1-4. Deacetylates 'Lys-16' of histone H4 (in vitro). Involved in NR0B2/SHP corepression function through chromatin remodeling: Recruited to LRH1 target gene promoters by NR0B2/SHP thereby stimulating histone H3 and H4 deacetylation leading to transcriptional repression. Proposed to contribute to genomic integrity via positive regulation of telomere length; however, reports on localization to pericentromeric heterochromatin are conflicting. Proposed to play a role in constitutive heterochromatin (CH) formation and/or maintenance through regulation of the available pool of nuclear SUV39H1. Upon oxidative/metabolic stress decreases SUV39H1 degradation by inhibiting SUV39H1 polyubiquitination by MDM2. This increase in SUV39H1 levels enhances SUV39H1 turnover in CH, which in turn seems to accelerate renewal of the heterochromatin which correlates with greater genomic integrity during stress response. Deacetylates 'Lys-382' of p53/TP53 and impairs its ability to induce transcription-dependent proapoptotic program and modulate cell senescence. Deacetylates TAF1B and thereby represses rDNA transcription by the RNA polymerase I. Deacetylates MYC, promotes the association of MYC with MAX and decreases MYC stability leading to compromised transformational capability. Deacetylates FOXO3 in response to oxidative stress thereby increasing its ability to induce cell cycle arrest and resistance to oxidative stress but inhibiting FOXO3-mediated induction of apoptosis transcriptional activity; also leading to FOXO3 ubiquitination and protesomal degradation. Appears to have a similar effect on MLLT7/FOXO4 in regulation of transcriptional activity and apoptosis. Deacetylates DNMT1; thereby impairs DNMT1 methyltransferase-independent transcription repressor activity, modulates DNMT1 cell cycle regulatory function and DNMT1-mediated gene silencing. Deacetylates RELA/NF-kappa-B p65 thereby inhibiting its transactivating potential and augments apoptosis in response to TNF-alpha. Deacetylates HIF1A, KAT5/TIP60, RB1 and HIC1. Deacetylates FOXO1 resulting in its nuclear retention and enhancement of its transcriptional activity leading to increased gluconeogenesis in liver. Inhibits E2F1 transcriptional activity and apoptotic function, possibly by deacetylation. Involved in HES1- and HEY2-mediated transcriptional repression. In cooperation with MYCN seems to be involved in transcriptional repression of DUSP6/MAPK3 leading to MYCN stabilization by phosphorylation at 'Ser-62'. Deacetylates MEF2D. Required for antagonist-mediated transcription suppression of AR-dependent genes which may be linked to local deacetylation of histone H3. Represses HNF1A-mediated transcription. Required for the repression of ESRRG by CREBZF. Deacetylates NR1H3 and NR1H2 and deacetylation of NR1H3 at 'Lys-434' positively regulates transcription of NR1H3:RXR target genes, promotes NR1H3 proteasomal degradation and results in cholesterol efflux; a promoter clearing mechanism after reach round of transcription is proposed. Involved in lipid metabolism: deacetylates LPIN1, thereby inhibiting diacylglycerol synthesis. Implicated in regulation of adipogenesis and fat mobilization in white adipocytes by repression of PPARG which probably involves association with NCOR1 and SMRT/NCOR2. Deacetylates p300/EP300 and PRMT1. Deacetylates ACSS2 leading to its activation, and HMGCS1 deacetylation. Involved in liver and muscle metabolism. Through deacetylation and activation of PPARGC1A is required to activate fatty acid oxidation in skeletal muscle under low-glucose conditions and is involved in glucose homeostasis. Involved in regulation of PPARA and fatty acid beta-oxidation in liver. Involved in positive regulation of insulin secretion in pancreatic beta cells in response to glucose; the function seems to imply transcriptional repression of UCP2. Proposed to deacetylate IRS2 thereby facilitating its insulin-induced tyrosine phosphorylation. Deacetylates SREBF1 isoform SREBP-1C thereby decreasing its stability and transactivation in lipogenic gene expression. Involved in DNA damage response by repressing genes which are involved in DNA repair, such as XPC and TP73, deacetylating XRCC6/Ku70, and facilitating recruitment of additional factors to sites of damaged DNA, such as SIRT1-deacetylated NBN can recruit ATM to initiate DNA repair and SIRT1-deacetylated XPA interacts with RPA2. Also involved in DNA repair of DNA double-strand breaks by homologous recombination and specifically single-strand annealing independently of XRCC6/Ku70 and NBN. Promotes DNA double-strand breaks by mediating deacetylation of SIRT6. Transcriptional suppression of XPC probably involves an E2F4:RBL2 suppressor complex and protein kinase B (AKT) signaling. Transcriptional suppression of TP73 probably involves E2F4 and PCAF. Deacetylates WRN thereby regulating its helicase and exonuclease activities and regulates WRN nuclear translocation in response to DNA damage. Deacetylates APEX1 at 'Lys-6' and 'Lys-7' and stimulates cellular AP endonuclease activity by promoting the association of APEX1 to XRCC1. Catalyzes deacetylation of ERCC4/XPF, thereby impairing interaction with ERCC1 and nucleotide excision repair (NER). Increases p53/TP53-mediated transcription-independent apoptosis by blocking nuclear translocation of cytoplasmic p53/TP53 and probably redirecting it to mitochondria. Deacetylates XRCC6/Ku70 at 'Lys-539' and 'Lys-542' causing it to sequester BAX away from mitochondria thereby inhibiting stress-induced apoptosis. Is involved in autophagy, presumably by deacetylating ATG5, ATG7 and MAP1LC3B/ATG8. Deacetylates AKT1 which leads to enhanced binding of AKT1 and PDK1 to PIP3 and promotes their activation. Proposed to play role in regulation of STK11/LBK1-dependent AMPK signaling pathways implicated in cellular senescence which seems to involve the regulation of the acetylation status of STK11/LBK1. Can deacetylate STK11/LBK1 and thereby increase its activity, cytoplasmic localization and association with STRAD; however, the relevance of such activity in normal cells is unclear. In endothelial cells is shown to inhibit STK11/LBK1 activity and to promote its degradation. Deacetylates SMAD7 at 'Lys-64' and 'Lys-70' thereby promoting its degradation. Deacetylates CIITA and augments its MHC class II transactivation and contributes to its stability. Deacetylates MECOM/EVI1. Deacetylates PML at 'Lys-487' and this deacetylation promotes PML control of PER2 nuclear localization. During the neurogenic transition, represses selective NOTCH1-target genes through histone deacetylation in a BCL6-dependent manner and leading to neuronal differentiation. Regulates the circadian expression of several core clock genes, including BMAL1, RORC, PER2 and CRY1 and plays a critical role in maintaining a controlled rhythmicity in histone acetylation, thereby contributing to circadian chromatin remodeling. Deacetylates BMAL1 and histones at the circadian gene promoters in order to facilitate repression by inhibitory components of the circadian oscillator. Deacetylates PER2, facilitating its ubiquitination and degradation by the proteasome. Protects cardiomyocytes against palmitate-induced apoptosis. Deacetylates XBP1 isoform 2; deacetylation decreases protein stability of XBP1 isoform 2 and inhibits its transcriptional activity. Deacetylates PCK1 and directs its activity toward phosphoenolpyruvate production promoting gluconeogenesis. Involved in the CCAR2-mediated regulation of PCK1 and NR1D1. Deacetylates CTNB1 at 'Lys-49'. In POMC (pro-opiomelanocortin) neurons, required for leptin-induced activation of PI3K signaling. Deacetylates SOX9; promoting SOX9 nuclear localization and transactivation activity. Involved in the regulation of centrosome duplication: deacetylates CENATAC in G1 phase, allowing for SASS6 accumulation on the centrosome and subsequent procentriole assembly. Deacetylates NDC80/HEC1. In addition to protein deacetylase activity, also acts as a protein-lysine deacylase by mediating protein delactylation, depropionylation and decrotonylation. Mediates depropionylation of Osterix (SP7). Catalyzes decrotonylation of histones; it however does not represent a major histone decrotonylase. Mediates protein delactylation of TEAD1 and YAP1. Its function is as follows. Deacetylates 'Lys-382' of p53/TP53, however with lower activity than isoform 1. In combination, the two isoforms exert an additive effect. Isoform 2 regulates p53/TP53 expression and cellular stress response and is in turn repressed by p53/TP53 presenting a SIRT1 isoform-dependent auto-regulatory loop. Functionally, catalytically inactive 75SirT1 may be involved in regulation of apoptosis. May be involved in protecting chondrocytes from apoptotic death by associating with cytochrome C and interfering with apoptosome assembly. In terms of biological role, (Microbial infection) In case of HIV-1 infection, interacts with and deacetylates the viral Tat protein. The viral Tat protein inhibits SIRT1 deacetylation activity toward RELA/NF-kappa-B p65, thereby potentiates its transcriptional activity and SIRT1 is proposed to contribute to T-cell hyperactivation during infection. This Homo sapiens (Human) protein is NAD-dependent protein deacetylase sirtuin-1.